Reading from the N-terminus, the 519-residue chain is ATP synthase subunit beta, mitochondrial (519 aa).

The N-terminal 21 residues, Met-1–Ala-21, are a transit peptide targeting the mitochondrion. ATP-binding positions include Gly-184–Val-191 and Arg-216.

Belongs to the ATPase alpha/beta chains family. As to quaternary structure, F-type ATPases have 2 components, F(1) - the catalytic core - and F(o) - the membrane proton channel. F(1) has five subunits: alpha(3), beta(3), gamma(1), delta(1), epsilon(1), plus the additional subunit P18 (Tb427.05.1710) that is not present in F(1)F(o) ATP synthase from metazoa. Subunit P18 (Tb927.5.1710) interacts with the alpha subunit with a 1:1 stoichiometry; the interaction is direct. Subunit gamma is part of the central stalk. F(o) has three main subunits: a, b and c. The trypanosomal ATPase complex contains additional subunits that are not present in the F(1)F(o) ATP synthase from metazoa.

The protein resides in the mitochondrion. It is found in the mitochondrion inner membrane. It catalyses the reaction ATP + H2O + 4 H(+)(in) = ADP + phosphate + 5 H(+)(out). Its function is as follows. Mitochondrial membrane ATP synthase (F(1)F(o) ATP synthase) produces ATP from ADP in the presence of a proton gradient across the membrane which is generated by electron transport complexes of the respiratory chain. F-type ATPases consist of two structural domains, F(1) - containing the extramembraneous catalytic core, and F(o) - containing the membrane proton channel, linked together by a central stalk and a peripheral stalk. During catalysis, ATP synthesis in the catalytic domain of F(1) is coupled via a rotary mechanism of the central stalk subunits to proton translocation. Subunits alpha and beta form the catalytic core in F(1). Rotation of the central stalk against the surrounding alpha(3)beta(3) subunits leads to hydrolysis of ATP in three separate catalytic sites on the beta subunits. Contrary to the procyclic, insect form that requires F(1)F(o) ATP synthase for ATP synthesis, the bloodstream form relies on ATP hydrolysis by F(1)F(o) ATP synthase to maintain its mitochondrial membrane potential. The chain is ATP synthase subunit beta, mitochondrial from Trypanosoma brucei brucei.